The chain runs to 106 residues: GQPKANPTVTLFPPSSEELQANKATLVCLISDFYPGAVTVAWKADGSPVKAGVETTKPSKQSNNKYAASSYLSLTPEQWKSHRSYSCQVTHEGSTVEKTVAPTECS.

The Ig-like domain occupies P7–A101. An intrachain disulfide couples C28 to C87.

As to quaternary structure, immunoglobulins are composed of two identical heavy chains and two identical light chains; disulfide-linked.

It localises to the secreted. The protein localises to the cell membrane. In terms of biological role, constant region of immunoglobulin light chains. Immunoglobulins, also known as antibodies, are membrane-bound or secreted glycoproteins produced by B lymphocytes. In the recognition phase of humoral immunity, the membrane-bound immunoglobulins serve as receptors which, upon binding of a specific antigen, trigger the clonal expansion and differentiation of B lymphocytes into immunoglobulins-secreting plasma cells. Secreted immunoglobulins mediate the effector phase of humoral immunity, which results in the elimination of bound antigens. The antigen binding site is formed by the variable domain of one heavy chain, together with that of its associated light chain. Thus, each immunoglobulin has two antigen binding sites with remarkable affinity for a particular antigen. The variable domains are assembled by a process called V-(D)-J rearrangement and can then be subjected to somatic hypermutations which, after exposure to antigen and selection, allow affinity maturation for a particular antigen. The protein is Immunoglobulin lambda constant 1 of Homo sapiens (Human).